A 139-amino-acid chain; its full sequence is MCVRRVDILSRFDIALSLLQSLTHSHTVLRHLCFLPTIIYKHLCEFTISFSSPVISTGQHIDVGDEDYHDGDDDVDYTDDVDDVDDPHGSPSQLLQGGYQRNQHYGGGNYQSGYYRPNKQHGNGYGGQYPKKYGSGYKH.

A disordered region spans residues 61 to 139 (IDVGDEDYHD…PKKYGSGYKH (79 aa)). The segment covering 64–85 (GDEDYHDGDDDVDYTDDVDDVD) has biased composition (acidic residues). A compositionally biased stretch (polar residues) spans 90-103 (SPSQLLQGGYQRNQ).

The protein belongs to the immunogenic miracidial antigen family.

The polypeptide is Immunogenic miracidial antigen 8I (8I) (Schistosoma japonicum (Blood fluke)).